The sequence spans 88 residues: Putative membrane protein insertion efficiency factor (88 aa).

Residues 65 to 88 are disordered; sequence LDFVPPKKDKNDDSGHTCKAHHHH. Over residues 69–80 the composition is skewed to basic and acidic residues; that stretch reads PPKKDKNDDSGH.

This sequence belongs to the UPF0161 family.

It localises to the cell membrane. Functionally, could be involved in insertion of integral membrane proteins into the membrane. The sequence is that of Putative membrane protein insertion efficiency factor from Listeria innocua serovar 6a (strain ATCC BAA-680 / CLIP 11262).